The chain runs to 130 residues: Small ribosomal subunit protein uS8 (130 aa).

Belongs to the universal ribosomal protein uS8 family. In terms of assembly, part of the 30S ribosomal subunit. Contacts proteins S5 and S12.

Functionally, one of the primary rRNA binding proteins, it binds directly to 16S rRNA central domain where it helps coordinate assembly of the platform of the 30S subunit. The sequence is that of Small ribosomal subunit protein uS8 from Alcanivorax borkumensis (strain ATCC 700651 / DSM 11573 / NCIMB 13689 / SK2).